A 448-amino-acid chain; its full sequence is Glutamyl-tRNA reductase (448 aa).

Residues Thr49 to Arg52, Ser109, Glu114 to Gln116, and Gln120 each bind substrate. Cys50 (nucleophile) is an active-site residue. Gly189 to Gly194 provides a ligand contact to NADP(+).

The protein belongs to the glutamyl-tRNA reductase family. In terms of assembly, homodimer.

It carries out the reaction (S)-4-amino-5-oxopentanoate + tRNA(Glu) + NADP(+) = L-glutamyl-tRNA(Glu) + NADPH + H(+). Its pathway is porphyrin-containing compound metabolism; protoporphyrin-IX biosynthesis; 5-aminolevulinate from L-glutamyl-tRNA(Glu): step 1/2. Its function is as follows. Catalyzes the NADPH-dependent reduction of glutamyl-tRNA(Glu) to glutamate 1-semialdehyde (GSA). This is Glutamyl-tRNA reductase from Staphylococcus epidermidis (strain ATCC 12228 / FDA PCI 1200).